We begin with the raw amino-acid sequence, 347 residues long: Guanine nucleotide-binding protein alpha-6 subunit (347 aa).

A G-alpha domain is found at 30-347 (GITQVLLLGA…IIVGHVMDLV (318 aa)). Positions 33–46 (QVLLLGAGESGKST) are G1 motif. Residues 38–45 (GAGESGKS), 172–178 (LRARVTT), 197–201 (DVGGQ), 266–269 (NKKD), and Ala-322 contribute to the GTP site. Residues Ser-45 and Thr-178 each contribute to the Mg(2+) site. Residues 170 to 178 (DALRARVTT) form a G2 motif region. Positions 193–202 (MKIIDVGGQR) are G3 motif. Residues 262 to 269 (ILFLNKKD) form a G4 motif region. The tract at residues 320-325 (TIAVDT) is G5 motif.

Belongs to the G-alpha family. In terms of assembly, g proteins are composed of 3 units; alpha, beta and gamma. The alpha chain contains the guanine nucleotide binding site.

In terms of biological role, guanine nucleotide-binding proteins (G proteins) are involved as modulators or transducers in various transmembrane signaling systems. G alpha-6 is involved in the folic acid chemotaxis signal transduction pathway. The chain is Guanine nucleotide-binding protein alpha-6 subunit (gpaF) from Dictyostelium discoideum (Social amoeba).